The following is a 361-amino-acid chain: Molybdenum import ATP-binding protein ModC (361 aa).

Residues M1–Q228 form the ABC transporter domain. G31–T38 lines the ATP pocket. A Mop domain is found at G289 to D356.

This sequence belongs to the ABC transporter superfamily. Molybdate importer (TC 3.A.1.8) family. As to quaternary structure, the complex is composed of two ATP-binding proteins (ModC), two transmembrane proteins (ModB) and a solute-binding protein (ModA).

It localises to the cell inner membrane. The catalysed reaction is molybdate(out) + ATP + H2O = molybdate(in) + ADP + phosphate + H(+). In terms of biological role, part of the ABC transporter complex ModABC involved in molybdenum import. Responsible for energy coupling to the transport system. In Shewanella sp. (strain MR-4), this protein is Molybdenum import ATP-binding protein ModC.